The chain runs to 246 residues: Heavy metal-associated isoprenylated plant protein 8 (246 aa).

Residues 1 to 31 (MGKNKQNGESDNKSEKKNQKNGDSSVDKSDK) form a disordered region. An HMA 1 domain is found at 35-99 (CKEIVLKVYM…RVQKKFSRNA (65 aa)). Positions 46 and 49 each coordinate a metal cation. The disordered stretch occupies residues 96–122 (SRNAEMISPKHNPKQDQKEPQQKKESA). Residues 108–122 (PKQDQKEPQQKKESA) are compositionally biased toward basic and acidic residues. One can recognise an HMA 2 domain in the interval 125–189 (IKTAILRMNM…IKKKLGKHAE (65 aa)). Residues C136 and C139 each contribute to the a metal cation site. The disordered stretch occupies residues 191 to 226 (LSQITEKGKDNNKKNNNKKEESDGNKIFSYPPQYSS). A compositionally biased stretch (basic and acidic residues) spans 196 to 214 (EKGKDNNKKNNNKKEESDG). Cysteine methyl ester is present on C243. Residue C243 is the site of S-farnesyl cysteine attachment. Positions 244–246 (SIM) are cleaved as a propeptide — removed in mature form.

Belongs to the HIPP family.

Heavy-metal-binding protein. The protein is Heavy metal-associated isoprenylated plant protein 8 of Arabidopsis thaliana (Mouse-ear cress).